A 439-amino-acid polypeptide reads, in one-letter code: Glutamine synthetase (439 aa).

Residues 13-98 form the GS beta-grasp domain; it reads ENVRFIRLQF…VICDVYTPDG (86 aa). The GS catalytic domain occupies 105-439; sequence PRYRLRRMME…NWELQRYLYL (335 aa). Residues E128 and E130 each coordinate Mg(2+). Residue E180 coordinates ATP. Mg(2+) contacts are provided by E185 and E192. L-glutamate-binding positions include 236–237 and G237; that span reads NG. H241 serves as a coordination point for Mg(2+). Residues 243 to 245 and S245 contribute to the ATP site; that span reads HMS. R294, E300, and R312 together coordinate L-glutamate. Residues R312, R317, and K324 each coordinate ATP. E329 contacts Mg(2+). R331 is a binding site for L-glutamate.

It belongs to the glutamine synthetase family. In terms of assembly, oligomer of 12 subunits arranged in the form of two hexagons. In its feedback-inhibited form, interacts with TnrA in order to block its DNA-binding activity. Mg(2+) serves as cofactor.

Its subcellular location is the cytoplasm. It carries out the reaction L-glutamate + NH4(+) + ATP = L-glutamine + ADP + phosphate + H(+). Its activity is regulated as follows. Inhibited by glutamine. In terms of biological role, glutamine synthetase (GS) is an unusual multitasking protein that functions as an enzyme, a transcription coregulator, and a chaperone in ammonium assimilation and in the regulation of genes involved in nitrogen metabolism. It catalyzes the ATP-dependent biosynthesis of glutamine from glutamate and ammonia. Feedback-inhibited GlnA also interacts with and regulates the activity of the transcriptional regulator TnrA. During nitrogen limitation, TnrA is in its DNA-binding active state and turns on the transcription of genes required for nitrogen assimilation. Under conditions of nitrogen excess, feedback-inhibited GlnA forms a stable complex with TnrA, which inhibits its DNA-binding activity. In contrast, feedback-inhibited GlnA acts as a chaperone to stabilize the DNA-binding activity of GlnR, which represses the transcription of nitrogen assimilation genes. The chain is Glutamine synthetase from Thermotoga maritima (strain ATCC 43589 / DSM 3109 / JCM 10099 / NBRC 100826 / MSB8).